The chain runs to 514 residues: Peptide chain release factor 3 (514 aa).

In terms of domain architecture, tr-type G spans Lys8–His268. GTP contacts are provided by residues Ser17–Thr24, Asp85–His89, and Asn139–Asp142.

Belongs to the TRAFAC class translation factor GTPase superfamily. Classic translation factor GTPase family. PrfC subfamily.

The protein resides in the cytoplasm. In terms of biological role, increases the formation of ribosomal termination complexes and stimulates activities of RF-1 and RF-2. It binds guanine nucleotides and has strong preference for UGA stop codons. It may interact directly with the ribosome. The stimulation of RF-1 and RF-2 is significantly reduced by GTP and GDP, but not by GMP. The chain is Peptide chain release factor 3 from Streptococcus pyogenes serotype M18 (strain MGAS8232).